We begin with the raw amino-acid sequence, 1068 residues long: Sucrose-phosphate synthase (1068 aa).

2 disordered regions span residues 18 to 47 (HTSS…GAHM) and 118 to 139 (KEQE…SEGE). Over residues 23 to 32 (GAGGGGGGGD) the composition is skewed to gly residues. The segment covering 118–128 (KEQEQVRREAT) has biased composition (basic and acidic residues).

It belongs to the glycosyltransferase 1 family. As to quaternary structure, homodimer or homotetramer.

The catalysed reaction is beta-D-fructose 6-phosphate + UDP-alpha-D-glucose = sucrose 6(F)-phosphate + UDP + H(+). The protein operates within glycan biosynthesis; sucrose biosynthesis; sucrose from D-fructose 6-phosphate and UDP-alpha-D-glucose: step 1/2. Activity is regulated by phosphorylation and moderated by concentration of metabolites and light. Functionally, plays a role in photosynthetic sucrose synthesis by catalyzing the rate-limiting step of sucrose biosynthesis from UDP-glucose and fructose- 6-phosphate. Involved in the regulation of carbon partitioning in the leaves of plants. May regulate the synthesis of sucrose and therefore play a major role as a limiting factor in the export of photoassimilates out of the leaf. Plays a role for sucrose availability that is essential for plant growth and fiber elongation. The polypeptide is Sucrose-phosphate synthase (Zea mays (Maize)).